The chain runs to 330 residues: Phosphate acyltransferase (330 aa).

This sequence belongs to the PlsX family. In terms of assembly, homodimer. Probably interacts with PlsY.

The protein resides in the cytoplasm. It catalyses the reaction a fatty acyl-[ACP] + phosphate = an acyl phosphate + holo-[ACP]. It functions in the pathway lipid metabolism; phospholipid metabolism. Its function is as follows. Catalyzes the reversible formation of acyl-phosphate (acyl-PO(4)) from acyl-[acyl-carrier-protein] (acyl-ACP). This enzyme utilizes acyl-ACP as fatty acyl donor, but not acyl-CoA. The polypeptide is Phosphate acyltransferase (Streptococcus agalactiae serotype Ia (strain ATCC 27591 / A909 / CDC SS700)).